Consider the following 321-residue polypeptide: Malate dehydrogenase (321 aa).

Residues 10–15 (GSGMIG) and aspartate 34 contribute to the NAD(+) site. The substrate site is built by arginine 83 and arginine 89. NAD(+) contacts are provided by residues asparagine 96 and 119–121 (ITN). Residues asparagine 121 and arginine 152 each contribute to the substrate site. Histidine 176 acts as the Proton acceptor in catalysis.

It belongs to the LDH/MDH superfamily. MDH type 3 family.

The enzyme catalyses (S)-malate + NAD(+) = oxaloacetate + NADH + H(+). Catalyzes the reversible oxidation of malate to oxaloacetate. The protein is Malate dehydrogenase of Bartonella bacilliformis (strain ATCC 35685 / KC583 / Herrer 020/F12,63).